A 217-amino-acid chain; its full sequence is Small ribosomal subunit protein uS3c (217 aa).

The 72-residue stretch at 47-118 (IQKHVKSVSN…NLRVTLTGVI (72 aa)) folds into the KH type-2 domain.

The protein belongs to the universal ribosomal protein uS3 family. As to quaternary structure, part of the 30S ribosomal subunit.

It localises to the plastid. It is found in the chloroplast. In Adiantum capillus-veneris (Maidenhair fern), this protein is Small ribosomal subunit protein uS3c (rps3).